The following is a 138-amino-acid chain: Phosphoribosyl-AMP cyclohydrolase (138 aa).

Residue Asp-84 coordinates Mg(2+). A Zn(2+)-binding site is contributed by Cys-85. Mg(2+)-binding residues include Asp-86 and Asp-88. Cys-102 and Cys-109 together coordinate Zn(2+).

It belongs to the PRA-CH family. In terms of assembly, homodimer. It depends on Mg(2+) as a cofactor. The cofactor is Zn(2+).

The protein resides in the cytoplasm. The enzyme catalyses 1-(5-phospho-beta-D-ribosyl)-5'-AMP + H2O = 1-(5-phospho-beta-D-ribosyl)-5-[(5-phospho-beta-D-ribosylamino)methylideneamino]imidazole-4-carboxamide. It participates in amino-acid biosynthesis; L-histidine biosynthesis; L-histidine from 5-phospho-alpha-D-ribose 1-diphosphate: step 3/9. In terms of biological role, catalyzes the hydrolysis of the adenine ring of phosphoribosyl-AMP. This chain is Phosphoribosyl-AMP cyclohydrolase, found in Burkholderia pseudomallei (strain K96243).